Consider the following 186-residue polypeptide: Holliday junction branch migration complex subunit RuvA (186 aa).

Residues 1-61 (MYSYIKGKVV…ENLQILYGFN (61 aa)) are domain I. Positions 62–134 (DNKNLLFFKK…LKGDLIFSEK (73 aa)) are domain II. Residues 134–135 (KI) are flexible linker. Positions 136 to 186 (ILNPKKTELEKILLNLGFVKKEIKSVLNQIDDKKELELMLKEVLLKLAKNI) are domain III.

The protein belongs to the RuvA family. In terms of assembly, homotetramer. Forms an RuvA(8)-RuvB(12)-Holliday junction (HJ) complex. HJ DNA is sandwiched between 2 RuvA tetramers; dsDNA enters through RuvA and exits via RuvB. An RuvB hexamer assembles on each DNA strand where it exits the tetramer. Each RuvB hexamer is contacted by two RuvA subunits (via domain III) on 2 adjacent RuvB subunits; this complex drives branch migration. In the full resolvosome a probable DNA-RuvA(4)-RuvB(12)-RuvC(2) complex forms which resolves the HJ.

It localises to the cytoplasm. In terms of biological role, the RuvA-RuvB-RuvC complex processes Holliday junction (HJ) DNA during genetic recombination and DNA repair, while the RuvA-RuvB complex plays an important role in the rescue of blocked DNA replication forks via replication fork reversal (RFR). RuvA specifically binds to HJ cruciform DNA, conferring on it an open structure. The RuvB hexamer acts as an ATP-dependent pump, pulling dsDNA into and through the RuvAB complex. HJ branch migration allows RuvC to scan DNA until it finds its consensus sequence, where it cleaves and resolves the cruciform DNA. This is Holliday junction branch migration complex subunit RuvA from Phytoplasma mali (strain AT).